We begin with the raw amino-acid sequence, 158 residues long: Large ribosomal subunit protein uL16 (158 aa).

Belongs to the universal ribosomal protein uL16 family. In terms of assembly, part of the 50S ribosomal subunit.

In terms of biological role, binds 23S rRNA and is also seen to make contacts with the A and possibly P site tRNAs. The polypeptide is Large ribosomal subunit protein uL16 (Prochlorococcus marinus (strain MIT 9313)).